The primary structure comprises 290 residues: Ribosomal RNA small subunit methyltransferase A (290 aa).

Residues Asn27, Leu29, Gly54, Glu75, Asp100, and Asn125 each contribute to the S-adenosyl-L-methionine site.

Belongs to the class I-like SAM-binding methyltransferase superfamily. rRNA adenine N(6)-methyltransferase family. RsmA subfamily.

The protein localises to the cytoplasm. It catalyses the reaction adenosine(1518)/adenosine(1519) in 16S rRNA + 4 S-adenosyl-L-methionine = N(6)-dimethyladenosine(1518)/N(6)-dimethyladenosine(1519) in 16S rRNA + 4 S-adenosyl-L-homocysteine + 4 H(+). Functionally, specifically dimethylates two adjacent adenosines (A1518 and A1519) in the loop of a conserved hairpin near the 3'-end of 16S rRNA in the 30S particle. May play a critical role in biogenesis of 30S subunits. This Streptococcus gordonii (strain Challis / ATCC 35105 / BCRC 15272 / CH1 / DL1 / V288) protein is Ribosomal RNA small subunit methyltransferase A.